The primary structure comprises 324 residues: Beta-ketoacyl-[acyl-carrier-protein] synthase III (324 aa).

Catalysis depends on residues Cys112 and His250. An ACP-binding region spans residues 251 to 255; sequence QANIR. Asn280 is a catalytic residue.

This sequence belongs to the thiolase-like superfamily. FabH family. In terms of assembly, homodimer.

It localises to the cytoplasm. It carries out the reaction malonyl-[ACP] + acetyl-CoA + H(+) = 3-oxobutanoyl-[ACP] + CO2 + CoA. The protein operates within lipid metabolism; fatty acid biosynthesis. In terms of biological role, catalyzes the condensation reaction of fatty acid synthesis by the addition to an acyl acceptor of two carbons from malonyl-ACP. Catalyzes the first condensation reaction which initiates fatty acid synthesis and may therefore play a role in governing the total rate of fatty acid production. Possesses both acetoacetyl-ACP synthase and acetyl transacylase activities. Its substrate specificity determines the biosynthesis of branched-chain and/or straight-chain of fatty acids. This is Beta-ketoacyl-[acyl-carrier-protein] synthase III from Clostridium novyi (strain NT).